A 147-amino-acid polypeptide reads, in one-letter code: Small ribosomal subunit protein eS19 (147 aa).

Belongs to the eukaryotic ribosomal protein eS19 family. In terms of assembly, part of the 30S ribosomal subunit.

Functionally, may be involved in maturation of the 30S ribosomal subunit. This chain is Small ribosomal subunit protein eS19, found in Archaeoglobus fulgidus (strain ATCC 49558 / DSM 4304 / JCM 9628 / NBRC 100126 / VC-16).